The chain runs to 282 residues: MYRERGMVGSKSEVVDRKRINEIHDNRPSHSMSQPVNGKGKVTSTSVLMGKQQLHDKESSRSGSISKTNISDAVDISDTDSEESEVSGSDGEDTSWISWFCNLRGNEFFCEVDDDYIQDDFNLCGLSHQVPYYDYALDLILDVESSHGEMFTEEQNELIESAAEMLYGMIHARFILTSKGLASMLDKYKNYDFGRCPRVYCCGQPCLPVGQSDIPRASTVKIYCPKCEDVYYPRSKYQGNIDGAYFGTTFPHLFLMTYGHLKPQKASQSYTQRVFGFKLHKP.

A disordered region spans residues 1 to 92 (MYRERGMVGS…ESEVSGSDGE (92 aa)). The segment covering 13 to 28 (EVVDRKRINEIHDNRP) has biased composition (basic and acidic residues). Composition is skewed to polar residues over residues 29-47 (SHSM…STSV) and 61-71 (RSGSISKTNIS). A compositionally biased stretch (acidic residues) spans 75 to 92 (DISDTDSEESEVSGSDGE).

It belongs to the casein kinase 2 subunit beta family. As to quaternary structure, heterotetramer of two catalytic alpha subunits and two regulatory beta subunits. Interacts with CCA1. Phosphorylated by alpha subunit.

The protein localises to the cytoplasm. It localises to the cytosol. Its subcellular location is the nucleus. Plays a complex role in regulating the basal catalytic activity of the alpha subunit. The tetrameric holoenzyme CK2, composed of two alpha and two beta subunits, phosphorylates the transcription factor PIF1 after an exposure to light, resulting in a proteasome-dependent degradation of PIF1 and promotion of photomorphogenesis. CK2 phosphorylates translation initiation factors. May participate in the regulation of the initiation of translation. The sequence is that of Casein kinase II subunit beta-2 (CKB2) from Arabidopsis thaliana (Mouse-ear cress).